The chain runs to 189 residues: Peptidyl-tRNA hydrolase (189 aa).

Tyr14 is a binding site for tRNA. His19 acts as the Proton acceptor in catalysis. TRNA-binding residues include Tyr64, Asn66, and Asn112.

Belongs to the PTH family. In terms of assembly, monomer.

The protein resides in the cytoplasm. It carries out the reaction an N-acyl-L-alpha-aminoacyl-tRNA + H2O = an N-acyl-L-amino acid + a tRNA + H(+). Hydrolyzes ribosome-free peptidyl-tRNAs (with 1 or more amino acids incorporated), which drop off the ribosome during protein synthesis, or as a result of ribosome stalling. Functionally, catalyzes the release of premature peptidyl moieties from peptidyl-tRNA molecules trapped in stalled 50S ribosomal subunits, and thus maintains levels of free tRNAs and 50S ribosomes. The polypeptide is Peptidyl-tRNA hydrolase (Clostridium botulinum (strain Kyoto / Type A2)).